Consider the following 266-residue polypeptide: Glutamate racemase (266 aa).

Substrate contacts are provided by residues 9–10 (DS) and 41–42 (YG). Residue cysteine 72 is the Proton donor/acceptor of the active site. Residue 73–74 (NT) participates in substrate binding. The active-site Proton donor/acceptor is cysteine 184. Residue 185–186 (TH) participates in substrate binding.

It belongs to the aspartate/glutamate racemases family.

It carries out the reaction L-glutamate = D-glutamate. It participates in cell wall biogenesis; peptidoglycan biosynthesis. Functionally, provides the (R)-glutamate required for cell wall biosynthesis. The sequence is that of Glutamate racemase from Staphylococcus haemolyticus.